The following is a 794-amino-acid chain: Inactive zinc metalloprotease C354.09c (794 aa).

Residues 1-56 (MTDEKHVYVPPPKDPPSYEEVALHSALNNSAPPNDGEQNETSMEEMEIIEPPSEDS) form a disordered region. A helical transmembrane segment spans residues 91–111 (IPFQFLYLAVIATVIILASYY).

Belongs to the peptidase M28 family. M28B subfamily.

It localises to the membrane. The protein is Inactive zinc metalloprotease C354.09c of Schizosaccharomyces pombe (strain 972 / ATCC 24843) (Fission yeast).